Here is a 608-residue protein sequence, read N- to C-terminus: 1-phosphatidylinositol 4,5-bisphosphate phosphodiesterase zeta-1 (608 aa).

An EF-hand domain is found at 35-70 (CSYIHVKQIFKDNDRLKQGRITIEEFRAIYRIITHR). The PI-PLC X-box domain maps to 155 to 299 (QDMTHPLNDY…LKFKILVKNK (145 aa)). Catalysis depends on residues histidine 170 and histidine 215. The disordered stretch occupies residues 305–324 (KETHERKGSDKRGDNQDKET). The region spanning 349–465 (LSDLVIYTKA…GYILKPHFLR (117 aa)) is the PI-PLC Y-box domain. In terms of domain architecture, C2 spans 465–589 (RESKSYFNPS…KGYRRIPLFS (125 aa)).

In terms of assembly, interacts via its C2 domain with PtdIns(3)P and, to a lesser extent, PtdIns(5)P in vitro. Requires Ca(2+) as cofactor. In terms of tissue distribution, expressed specifically in testis and sperm. Weakly expressed in pancreatic-duct cells. Up-regulated in pancreatic-duct cells from patients with cystic fibrosis.

The protein localises to the nucleus. The protein resides in the cytoplasm. It is found in the perinuclear region. The catalysed reaction is a 1,2-diacyl-sn-glycero-3-phospho-(1D-myo-inositol-4,5-bisphosphate) + H2O = 1D-myo-inositol 1,4,5-trisphosphate + a 1,2-diacyl-sn-glycerol + H(+). Its function is as follows. The production of the second messenger molecules diacylglycerol (DAG) and inositol 1,4,5-trisphosphate (IP3) is mediated by activated phosphatidylinositol-specific phospholipase C enzymes. In vitro, hydrolyzes PtdIns(4,5)P2 in a Ca(2+)-dependent manner. Triggers intracellular Ca(2+) oscillations in oocytes solely during M phase and is involved in inducing oocyte activation and initiating embryonic development up to the blastocyst stage. Is therefore a strong candidate for the egg-activating soluble sperm factor that is transferred from the sperm into the egg cytoplasm following gamete membrane fusion. May exert an inhibitory effect on phospholipase-C-coupled processes that depend on calcium ions and protein kinase C, including CFTR trafficking and function. This Homo sapiens (Human) protein is 1-phosphatidylinositol 4,5-bisphosphate phosphodiesterase zeta-1.